The primary structure comprises 386 residues: GTPase Obg (386 aa).

One can recognise an Obg domain in the interval 1 to 159; sequence MKFVDEAKIK…RNLLLELLLL (159 aa). Residues 160 to 333 form the OBG-type G domain; that stretch reads ADVGMLGLPN…LCRDVVEYLE (174 aa). Residues 166 to 173, 191 to 195, 213 to 216, 283 to 286, and 314 to 316 each bind GTP; these read GLPNAGKS, FTTLV, DIPG, NKTD, and AAI. Mg(2+) is bound by residues serine 173 and threonine 193.

The protein belongs to the TRAFAC class OBG-HflX-like GTPase superfamily. OBG GTPase family. As to quaternary structure, monomer. The cofactor is Mg(2+).

It localises to the cytoplasm. Its function is as follows. An essential GTPase which binds GTP, GDP and possibly (p)ppGpp with moderate affinity, with high nucleotide exchange rates and a fairly low GTP hydrolysis rate. Plays a role in control of the cell cycle, stress response, ribosome biogenesis and in those bacteria that undergo differentiation, in morphogenesis control. In Psychromonas ingrahamii (strain DSM 17664 / CCUG 51855 / 37), this protein is GTPase Obg.